The chain runs to 137 residues: Small ribosomal subunit protein uS11 (137 aa).

Positions E116–V137 are disordered.

The protein belongs to the universal ribosomal protein uS11 family. As to quaternary structure, part of the 30S ribosomal subunit.

Located on the platform of the 30S subunit. This Pyrococcus furiosus (strain ATCC 43587 / DSM 3638 / JCM 8422 / Vc1) protein is Small ribosomal subunit protein uS11.